A 470-amino-acid polypeptide reads, in one-letter code: MAKPTTLYDKIWNDHLVDEQPDGTCLLYIDRHLVHEVTSPQAFEGLRVAGRKVHAPEKTLAVVDHNVPTTDRSKPNPDPESAEQIAALATNARDFGVQYFNEFDKRQGIVHVIGPEQGFTLPGTTIVCGDSHTSTHGAFGALAHGIGTSEVEHVLATQTLIQKKAKNMRAVVDGKLPDGVTAKDIILAIIGEIGTAGGTGYVLEYAGEAIRALTMEGRMTICNMSIEGGARAGLVAPDEKAYEFLKGRPLTPKGANWEQAVRYWDTLRSDDNAHFDHEIRLDAANLPPIVTWGTSPEDVVSVAGFVPDPAKIEDEAKRLSKERALAYMGLNAGTKITDIKLDRVFIGSCTNGRIEDLRAAAKVINGHTVNGHVNAMVVPGSGLVKEQAEAEGLDKIFIKAGFEWREPGCSMCLAMNPDKLAPEERCASTSNRNFEGRQGFKGRTHLVSPAMAAAAAIAGHFVDIRDWKAA.

Residues Cys-349, Cys-409, and Cys-412 each coordinate [4Fe-4S] cluster.

It belongs to the aconitase/IPM isomerase family. LeuC type 1 subfamily. As to quaternary structure, heterodimer of LeuC and LeuD. It depends on [4Fe-4S] cluster as a cofactor.

The catalysed reaction is (2R,3S)-3-isopropylmalate = (2S)-2-isopropylmalate. The protein operates within amino-acid biosynthesis; L-leucine biosynthesis; L-leucine from 3-methyl-2-oxobutanoate: step 2/4. In terms of biological role, catalyzes the isomerization between 2-isopropylmalate and 3-isopropylmalate, via the formation of 2-isopropylmaleate. The sequence is that of 3-isopropylmalate dehydratase large subunit from Afipia carboxidovorans (strain ATCC 49405 / DSM 1227 / KCTC 32145 / OM5) (Oligotropha carboxidovorans).